We begin with the raw amino-acid sequence, 553 residues long: MGPRPSTKNPVPMMLTVRVALVLSCICPANSIDGRPLAAAGIVVTGDKAVNIYTSSQTGSIIVKLLPNLPKDKEACAKAPLDAYNRTLTTLLTPLGDSIRRIQESVTTSGGRRQKRFIGAIIGGVALGVATAAQITAAAALIQAKQNAANILRLKESIAATNEAVHEVTDGLSQLAVAVGKMQQFVNDQFNKTAQELGCIRIAQQVGVELNLYLTELTTVFGPQITSPALNKLTIQALYNLAGGNMDYLLTKLGVGNNQLSSLIGSGLITGNPILYDSQTQLLGIQVTLPSVGNLNNMRATYLETLSVSTTRGFASALVPKVVTQVGSVIEELDTSYCIETDLDLYCTRIVTFPMSPGIYSCLSGNTSACMYSKTEGALTTPYMTIKGSVIANCKMTTCRCVNPPGIISQNYGEAVSLIDKQSCNVLSLDGITLRLSGEFDATYQKNISIQDSQVIITGNLDISTELGNVNNSISNALNKLEESNSKLDKVNVKLTSTSALITYIVLTIISLVFGILSLVLACYLMYKQKAQQKTLLWLGNNTLDQMRATTKM.

The N-terminal stretch at 1–31 (MGPRPSTKNPVPMMLTVRVALVLSCICPANS) is a signal peptide. The Extracellular segment spans residues 32–500 (IDGRPLAAAG…VNVKLTSTSA (469 aa)). 5 disulfides stabilise this stretch: cysteine 76-cysteine 199, cysteine 338-cysteine 347, cysteine 362-cysteine 370, cysteine 394-cysteine 399, and cysteine 401-cysteine 424. Asparagine 85 carries an N-linked (GlcNAc...) asparagine; by host glycan. The tract at residues 117-141 (FIGAIIGGVALGVATAAQITAAAAL) is fusion peptide. A coiled-coil region spans residues 142 to 170 (IQAKQNAANILRLKESIAATNEAVHEVTD). N-linked (GlcNAc...) asparagine; by host glycosylation occurs at asparagine 191. An N-linked (GlcNAc...) asparagine; by host glycan is attached at asparagine 366. N-linked (GlcNAc...) asparagine; by host glycans are attached at residues asparagine 447 and asparagine 471. Positions 466-491 (ELGNVNNSISNALNKLEESNSKLDKV) form a coiled coil. A helical membrane pass occupies residues 501–521 (LITYIVLTIISLVFGILSLVL). The Cytoplasmic portion of the chain corresponds to 522–553 (ACYLMYKQKAQQKTLLWLGNNTLDQMRATTKM). Cysteine 523 carries S-palmitoyl cysteine; by host lipidation.

Belongs to the paramyxoviruses fusion glycoprotein family. As to quaternary structure, homotrimer of disulfide-linked F1-F2. The inactive precursor F0 is glycosylated and proteolytically cleaved into F1 and F2 to be functionally active. The cleavage is mediated by cellular proteases during the transport and maturation of the polypeptide.

It localises to the virion membrane. The protein localises to the host cell membrane. In terms of biological role, class I viral fusion protein. Under the current model, the protein has at least 3 conformational states: pre-fusion native state, pre-hairpin intermediate state, and post-fusion hairpin state. During viral and plasma cell membrane fusion, the heptad repeat (HR) regions assume a trimer-of-hairpins structure, positioning the fusion peptide in close proximity to the C-terminal region of the ectodomain. The formation of this structure appears to drive apposition and subsequent fusion of viral and plasma cell membranes. Directs fusion of viral and cellular membranes leading to delivery of the nucleocapsid into the cytoplasm. This fusion is pH independent and occurs directly at the outer cell membrane. The trimer of F1-F2 (F protein) probably interacts with HN at the virion surface. Upon HN binding to its cellular receptor, the hydrophobic fusion peptide is unmasked and interacts with the cellular membrane, inducing the fusion between cell and virion membranes. Later in infection, F proteins expressed at the plasma membrane of infected cells could mediate fusion with adjacent cells to form syncytia, a cytopathic effect that could lead to tissue necrosis. The chain is Fusion glycoprotein F0 (F) from Gallus gallus (Chicken).